We begin with the raw amino-acid sequence, 238 residues long: Ribonuclease PH (238 aa).

The interval Pro-67–Thr-87 is disordered. Phosphate contacts are provided by residues Arg-86 and Gly-124–Arg-126.

Belongs to the RNase PH family. As to quaternary structure, homohexameric ring arranged as a trimer of dimers.

The enzyme catalyses tRNA(n+1) + phosphate = tRNA(n) + a ribonucleoside 5'-diphosphate. In terms of biological role, phosphorolytic 3'-5' exoribonuclease that plays an important role in tRNA 3'-end maturation. Removes nucleotide residues following the 3'-CCA terminus of tRNAs; can also add nucleotides to the ends of RNA molecules by using nucleoside diphosphates as substrates, but this may not be physiologically important. Probably plays a role in initiation of 16S rRNA degradation (leading to ribosome degradation) during starvation. The protein is Ribonuclease PH of Ralstonia nicotianae (strain ATCC BAA-1114 / GMI1000) (Ralstonia solanacearum).